Here is a 402-residue protein sequence, read N- to C-terminus: Multidrug resistance protein MdtH (402 aa).

Over 1 to 12 (MSRVSQARNLGK) the chain is Cytoplasmic. The chain crosses the membrane as a helical span at residues 13–33 (YFLLIDNMLVVLGFFVVFPLI). Topologically, residues 34–98 (SIRFVDQMGW…GFATMGIAHE (65 aa)) are periplasmic. A helical transmembrane segment spans residues 99–116 (PWLLWFSCFLSGLGGTLF). Topologically, residues 117–138 (DPPRSALVVKLIRPEQRGRFFS) are cytoplasmic. The helical transmembrane segment at 139-159 (LLMMQDSAGAVIGALLGSWLL) threads the bilayer. Residues 160 to 164 (QYDFR) lie on the Periplasmic side of the membrane. A helical membrane pass occupies residues 165–185 (LVCATGAILFILCALFNAWLL). Residues 186 to 213 (PAWKLSTVRTPVREGMRRVMSDKRFVTY) are Cytoplasmic-facing. Residues 214-234 (VLTLAGYYMLAVQVMLMLPIM) form a helical membrane-spanning segment. Topologically, residues 235–243 (VNDIAGSPA) are periplasmic. Residues 244 to 264 (AVKWMYAIEACLSLTLLYPIA) form a helical membrane-spanning segment. Over 265 to 276 (RWSEKRFRLEHR) the chain is Cytoplasmic. The chain crosses the membrane as a helical span at residues 277-297 (LMAGLLVMSLSMIPIGMVGNL). The Periplasmic segment spans residues 298–299 (QQ). The chain crosses the membrane as a helical span at residues 300-320 (LFTLICAFYIGSVIAEPARET). The Cytoplasmic segment spans residues 321-339 (LSASLADARARGSYMGFSR). Residues 340 to 360 (LGLAIGGAIGYIGGGWLFDMG) form a helical membrane-spanning segment. The Periplasmic portion of the chain corresponds to 361–367 (KALAQPE). The chain crosses the membrane as a helical span at residues 368–388 (LPWMMLGIIGFITFLALGWQF). Topologically, residues 389-402 (SHKRTPRRMLEPGA) are cytoplasmic.

This sequence belongs to the major facilitator superfamily. DHA1 family. MdtH (TC 2.A.1.2.21) subfamily.

It localises to the cell inner membrane. This is Multidrug resistance protein MdtH from Salmonella schwarzengrund (strain CVM19633).